We begin with the raw amino-acid sequence, 527 residues long: MMNEKQRLQYTAQIETDHPTDKKSALDENLQRLKQKTSQDYEKYFSTVFVPPSLKEAKKRGKEEVKYHKDFSIPEEFRGMGNGRKFYIRTYGCQMNEHDTEVMAGIFMALGYEPTDRPEDANVILLNTCAIRENAENKVFGEIGHLKPLKQNNPDLLLGVCGCMSQEESVVNKILKQFQYVDMIFGTHNIHRLPYILKEAYMSKEMVVEVWSKEGDVIENLPKVRKGNIKAWVNIMYGCDKFCTYCIVPYTRGKERSRRPEDIIQEVRHLAAQGYKEITLLGQNVNAYGKDFTDMKYGLGDLMDELRKIDIPRIRFTTSHPRDFDDRLIEVLAKGGNLVEHIHLPVQSGSSEVLKMMARKYTREQYLELVRKIKEAIPGVALTTDIIVGFPNETDEQFEETLSLYREVEFDSAFTFIYSPREGTPAAKMVDNVPMEVKKERLQRLNALVNEISAKKMKEYEGQVVEVLVEGESKNNPDVLAGYTRKNKLVNFVGPKSAIGQLVNVRITEAKTWTLNGEMVEETIEVK.

Positions 1 to 27 (MMNEKQRLQYTAQIETDHPTDKKSALD) are disordered. A compositionally biased stretch (basic and acidic residues) spans 15–27 (ETDHPTDKKSALD). The 119-residue stretch at 84–202 (RKFYIRTYGC…LPYILKEAYM (119 aa)) folds into the MTTase N-terminal domain. Residues cysteine 93, cysteine 129, cysteine 163, cysteine 239, cysteine 243, and cysteine 246 each coordinate [4Fe-4S] cluster. Residues 225–455 (RKGNIKAWVN…NALVNEISAK (231 aa)) form the Radical SAM core domain. In terms of domain architecture, TRAM spans 458 to 521 (KEYEGQVVEV…TWTLNGEMVE (64 aa)).

This sequence belongs to the methylthiotransferase family. MiaB subfamily. In terms of assembly, monomer. Requires [4Fe-4S] cluster as cofactor.

It is found in the cytoplasm. The catalysed reaction is N(6)-dimethylallyladenosine(37) in tRNA + (sulfur carrier)-SH + AH2 + 2 S-adenosyl-L-methionine = 2-methylsulfanyl-N(6)-dimethylallyladenosine(37) in tRNA + (sulfur carrier)-H + 5'-deoxyadenosine + L-methionine + A + S-adenosyl-L-homocysteine + 2 H(+). In terms of biological role, catalyzes the methylthiolation of N6-(dimethylallyl)adenosine (i(6)A), leading to the formation of 2-methylthio-N6-(dimethylallyl)adenosine (ms(2)i(6)A) at position 37 in tRNAs that read codons beginning with uridine. The chain is tRNA-2-methylthio-N(6)-dimethylallyladenosine synthase from Anoxybacillus flavithermus (strain DSM 21510 / WK1).